We begin with the raw amino-acid sequence, 159 residues long: Transcription elongation factor GreA (159 aa).

Belongs to the GreA/GreB family.

Functionally, necessary for efficient RNA polymerase transcription elongation past template-encoded arresting sites. The arresting sites in DNA have the property of trapping a certain fraction of elongating RNA polymerases that pass through, resulting in locked ternary complexes. Cleavage of the nascent transcript by cleavage factors such as GreA or GreB allows the resumption of elongation from the new 3'terminus. GreA releases sequences of 2 to 3 nucleotides. This Orientia tsutsugamushi (strain Ikeda) (Rickettsia tsutsugamushi) protein is Transcription elongation factor GreA.